The sequence spans 2164 residues: Hemagglutinin A (2164 aa).

The N-terminal stretch at 1 to 25 (MRKLNSLFSLAVLLSLLCWGQTAAA) is a signal peptide. Peptidase C25-like stretches follow at residues 26–539 (QGGP…TPPP), 540–991 (GGSS…TPPP), and 992–1443 (GGTS…TPPP). Disordered stretches follow at residues 493 to 512 (WDAP…LSES) and 520 to 541 (SWKT…PPGG). Low complexity predominate over residues 496–508 (PNGTPNPNPGTTT).

This sequence belongs to the peptidase C25 family.

In terms of biological role, agglutinates erythrocytes. The protein is Hemagglutinin A (hagA) of Porphyromonas gingivalis (strain ATCC BAA-308 / W83).